The primary structure comprises 192 residues: Dihydrofolate reductase (192 aa).

The 187-residue stretch at 5 to 191 (NVAIIVAALK…FTYNYTLWTR (187 aa)) folds into the DHFR domain. Residues alanine 11 and 18 to 24 (GIGYKGK) contribute to the NADP(+) site. 32–37 (EIRYFK) serves as a coordination point for substrate. NADP(+) is bound at residue 56–58 (RKT). Position 72 (arginine 72) interacts with substrate. 78-80 (SRS) contacts NADP(+). 2 residues coordinate substrate: isoleucine 112 and tyrosine 118. 113–120 (GGAEIYNE) is an NADP(+) binding site.

It belongs to the dihydrofolate reductase family.

The enzyme catalyses (6S)-5,6,7,8-tetrahydrofolate + NADP(+) = 7,8-dihydrofolate + NADPH + H(+). It functions in the pathway cofactor biosynthesis; tetrahydrofolate biosynthesis; 5,6,7,8-tetrahydrofolate from 7,8-dihydrofolate: step 1/1. In terms of biological role, key enzyme in folate metabolism. Catalyzes an essential reaction for de novo glycine and purine synthesis, and for DNA precursor synthesis. This Candida albicans (Yeast) protein is Dihydrofolate reductase (DFR1).